The primary structure comprises 217 residues: UPF0502 protein KPN78578_10500 (217 aa).

Belongs to the UPF0502 family.

The chain is UPF0502 protein KPN78578_10500 from Klebsiella pneumoniae subsp. pneumoniae (strain ATCC 700721 / MGH 78578).